The primary structure comprises 311 residues: Methionyl-tRNA formyltransferase (311 aa).

112–115 contacts (6S)-5,6,7,8-tetrahydrofolate; the sequence is SLLP.

This sequence belongs to the Fmt family.

It carries out the reaction L-methionyl-tRNA(fMet) + (6R)-10-formyltetrahydrofolate = N-formyl-L-methionyl-tRNA(fMet) + (6S)-5,6,7,8-tetrahydrofolate + H(+). Its function is as follows. Attaches a formyl group to the free amino group of methionyl-tRNA(fMet). The formyl group appears to play a dual role in the initiator identity of N-formylmethionyl-tRNA by promoting its recognition by IF2 and preventing the misappropriation of this tRNA by the elongation apparatus. This Bradyrhizobium sp. (strain ORS 278) protein is Methionyl-tRNA formyltransferase.